The following is a 481-amino-acid chain: UDP-glycosyltransferase 88F4 (481 aa).

UDP-alpha-D-glucose contacts are provided by residues serine 288, 357 to 358, 375 to 383, and 397 to 400; these read WA, HCGWNSVLE, and YAEQ.

It belongs to the UDP-glycosyltransferase family.

Glycosyltransferase that may possess chalcone and dihydrochalcone 2'-O-glucosyltransferase activity. The chain is UDP-glycosyltransferase 88F4 from Malus domestica (Apple).